A 203-amino-acid polypeptide reads, in one-letter code: Sperm-specific protein PHI-2B/PHI-3 (203 aa).

Basic residues predominate over residues 1–35; the sequence is MPSPSRKSRSRSRSRSKSPKRSPAKKARKTPKKPR. Disordered stretches follow at residues 1–46 and 104–203; these read MPSP…PSTL and KTSA…KSKK. The H15 domain occupies 41 to 120; the sequence is KKPSTLSMIV…GATGSFRVGK (80 aa). Composition is skewed to basic residues over residues 126–140 and 147–203; these read KKAK…KSSK and KAKK…KSKK.

In terms of processing, PL-II* and PL-IV are produced by post-translational cleavage of a common precursor. Sperm.

Its subcellular location is the nucleus. It localises to the chromosome. In terms of biological role, linker histones are implicated in chromatin remodeling and/or transcriptional regulation during spermiogenesis, the process of spermatid maturation into spermatozoa. Protamines substitute for histones in the chromatin of sperm during the haploid phase of spermatogenesis. They compact sperm DNA into a highly condensed, stable and inactive complex. This chain is Sperm-specific protein PHI-2B/PHI-3, found in Mytilus trossulus (Blue mussel).